Here is a 468-residue protein sequence, read N- to C-terminus: Cysteine--tRNA ligase (468 aa).

Cysteine 27 is a binding site for Zn(2+). The short motif at 29 to 39 (PTVYNYFHIGN) is the 'HIGH' region element. Cysteine 207, histidine 232, and glutamate 236 together coordinate Zn(2+). A 'KMSKS' region motif is present at residues 264–268 (KMAKS). Lysine 267 is a binding site for ATP.

The protein belongs to the class-I aminoacyl-tRNA synthetase family. Monomer. Requires Zn(2+) as cofactor.

The protein localises to the cytoplasm. The catalysed reaction is tRNA(Cys) + L-cysteine + ATP = L-cysteinyl-tRNA(Cys) + AMP + diphosphate. The polypeptide is Cysteine--tRNA ligase (Acetivibrio thermocellus (strain ATCC 27405 / DSM 1237 / JCM 9322 / NBRC 103400 / NCIMB 10682 / NRRL B-4536 / VPI 7372) (Clostridium thermocellum)).